Here is a 303-residue protein sequence, read N- to C-terminus: Sulfotransferase 6B1 (303 aa).

A 3'-phosphoadenylyl sulfate-binding site is contributed by 65–70 (KCGSNW). Histidine 118 (proton acceptor) is an active-site residue. 3'-phosphoadenylyl sulfate contacts are provided by residues arginine 140, serine 148, tyrosine 203, 237-242 (STFLAM), and 259-261 (RKG).

Belongs to the sulfotransferase 1 family. Expressed in brain, heart, kidney, thymus, lung, liver and testis.

The protein localises to the cytoplasm. Its subcellular location is the cytosol. It carries out the reaction thyroxine + 3'-phosphoadenylyl sulfate = thyroxine sulfate + adenosine 3',5'-bisphosphate + H(+). Functionally, sulfotransferase that utilizes 3'-phospho-5'-adenylyl sulfate (PAPS) as sulfonate donor to catalyze the sulfate conjugation of thyroxine. Involved in the metabolism of thyroxine. This is Sulfotransferase 6B1 (Sult6b1) from Mus musculus (Mouse).